A 334-amino-acid polypeptide reads, in one-letter code: Glycerol-1-phosphate dehydrogenase [NAD(P)+] (334 aa).

Residues Gly-77–Asp-81 and Thr-99–Ser-102 each bind NAD(+). Substrate is bound at residue Asp-104. Ser-108 is an NAD(+) binding site. Residue Asp-147 coordinates substrate. The Zn(2+) site is built by Asp-147 and His-225. His-229 is a substrate binding site. His-246 lines the Zn(2+) pocket.

Belongs to the glycerol-1-phosphate dehydrogenase family. It depends on Zn(2+) as a cofactor.

It localises to the cytoplasm. The catalysed reaction is sn-glycerol 1-phosphate + NAD(+) = dihydroxyacetone phosphate + NADH + H(+). It catalyses the reaction sn-glycerol 1-phosphate + NADP(+) = dihydroxyacetone phosphate + NADPH + H(+). The protein operates within membrane lipid metabolism; glycerophospholipid metabolism. Catalyzes the NAD(P)H-dependent reduction of dihydroxyacetonephosphate (DHAP or glycerone phosphate) to glycerol 1-phosphate (G1P). The G1P thus generated is used as the glycerophosphate backbone of phospholipids in the cellular membranes of Archaea. The sequence is that of Glycerol-1-phosphate dehydrogenase [NAD(P)+] from Methanococcus maripaludis (strain C6 / ATCC BAA-1332).